Here is a 172-residue protein sequence, read N- to C-terminus: Ribosome maturation factor RimM (172 aa).

Residues 96–170 (EENEFYFHEI…KITIEVMEGL (75 aa)) form the PRC barrel domain.

This sequence belongs to the RimM family. Binds ribosomal protein uS19.

It is found in the cytoplasm. An accessory protein needed during the final step in the assembly of 30S ribosomal subunit, possibly for assembly of the head region. Essential for efficient processing of 16S rRNA. May be needed both before and after RbfA during the maturation of 16S rRNA. It has affinity for free ribosomal 30S subunits but not for 70S ribosomes. This is Ribosome maturation factor RimM from Listeria monocytogenes serotype 4b (strain CLIP80459).